The chain runs to 663 residues: Cytochrome bo(3) ubiquinol oxidase subunit 1 (663 aa).

Over 1-16 (MFGKLSLDAVPFHEPI) the chain is Periplasmic. A helical membrane pass occupies residues 17–35 (VMVTIAGIILGGLALVGLI). At 36–52 (TYFGKWTYLWKEWLTSV) the chain is on the cytoplasmic side. The helical transmembrane segment at 53–80 (DHKRLGIMYIIVAIVMLLRGFADAIMMR) threads the bilayer. Ubiquinone-8-binding residues include R71 and D75. Residues 81-95 (SQQALASAGEAGFLP) lie on the Periplasmic side of the membrane. A helical membrane pass occupies residues 96 to 132 (PHHYDQIFTAHGVIMIFFVAMPFVIGLMNLVVPLQIG). H98 is a binding site for ubiquinone-8. H106 contributes to the heme b binding site. Topologically, residues 133–137 (ARDVA) are cytoplasmic. The helical transmembrane segment at 138 to 161 (FPFLNNLSFWFTVVGVILVNVSLG) threads the bilayer. The Periplasmic segment spans residues 162–184 (VGEFAQTGWLAYPPLSGIEYSPG). W170 serves as a coordination point for heme b. Residues 185–215 (VGVDYWIWSLQLSGIGTTLTGINFFVTILKM) form a helical membrane-spanning segment. The Cytoplasmic segment spans residues 216 to 224 (RAPGMTMFK). The chain crosses the membrane as a helical span at residues 225–260 (MPVFTWASLCANVLIIASFPILTVTVALLTLDRYLG). The Periplasmic segment spans residues 261–270 (THFFTNDMGG). Residues 271-307 (NMMMYINLIWAWGHPEVYILILPVFGVFSEIAATFSR) form a helical membrane-spanning segment. Position 284 (H284) interacts with Cu(2+). A cross-link (1'-histidyl-3'-tyrosine (His-Tyr)) is located at residues 284-288 (HPEVY). Fe(II)-heme o is bound at residue Y288. The Cytoplasmic portion of the chain corresponds to 308 to 311 (KRLF). Residues 312–326 (GYTSLVWATVCITVL) form a helical membrane-spanning segment. Residues 327 to 340 (SFIVWLHHFFTMGA) lie on the Periplasmic side of the membrane. Residues H333 and H334 each contribute to the Cu(2+) site. Residues 341 to 369 (GANVNAFFGITTMIIAIPTGVKIFNWLFT) form a helical membrane-spanning segment. The Cytoplasmic segment spans residues 370-377 (MYQGRIVF). The chain crosses the membrane as a helical span at residues 378–409 (HSAMLWTIGFIVTFSVGGMTGVLLAVPGADFV). Topologically, residues 410 to 412 (LHN) are periplasmic. 2 residues coordinate Fe(II)-heme o: H411 and H419. Residues 413-445 (SLFLIAHFHNVIIGGVVFGCFAGMTYWWPKAFG) form a helical membrane-spanning segment. H421 is a binding site for heme b. Residues 446-448 (FKL) lie on the Cytoplasmic side of the membrane. The helical transmembrane segment at 449-477 (NETWGKRAFWFWIIGFFVAFMPLYALGFM) threads the bilayer. Over 478 to 489 (GMTRRLSQQIDP) the chain is Periplasmic. 2 residues coordinate heme b: R481 and R482. The chain crosses the membrane as a helical span at residues 490–521 (QFHTMLMIAASGAVLIALGILCLVIQMYVSIR). Residues 522-587 (DRDQNRDLTG…DHYEEIHMPK (66 aa)) are Cytoplasmic-facing. A helical transmembrane segment spans residues 588–606 (NSGAGIVIAAFSTIFGFAM). Topologically, residues 607-613 (IWHIWWL) are periplasmic. The helical transmembrane segment at 614-632 (AIVGFAGMIITWIVKSFDE) threads the bilayer. Residues 633-663 (DVDYYVPVAEIEKLENQHFDEITKAGLKNGN) are Cytoplasmic-facing.

This sequence belongs to the heme-copper respiratory oxidase family. As to quaternary structure, the cytochrome bo(3) ubiquinol oxidase complex is a heterooctamer of two A chains, two B chains, two C chains and two D chains. It depends on Cu(2+) as a cofactor. Heme b serves as cofactor. The cofactor is Fe(II)-heme o.

It localises to the cell inner membrane. It catalyses the reaction 2 a ubiquinol + O2 + n H(+)(in) = 2 a ubiquinone + 2 H2O + n H(+)(out). Its function is as follows. Cytochrome bo(3) ubiquinol oxidase is the terminal enzyme in the aerobic respiratory chain of E.coli that predominates when cells are grown at high aeration. Catalyzes the four-electron reduction of O2 to water, using a ubiquinol as a membrane soluble electron donor for molecular oxygen reduction; ubiquinol-8 is the natural substrate for E.coli. Has proton pump activity across the membrane in addition to electron transfer, pumping 2 protons/electron and generating a proton motive force. All the redox centers of this enzyme complex are located within the largest subunit, subunit I. Protons are probably pumped via D- and K- channels found in this subunit. The polypeptide is Cytochrome bo(3) ubiquinol oxidase subunit 1 (cyoB) (Escherichia coli O157:H7).